Consider the following 501-residue polypeptide: UDP-N-acetylmuramate--L-alanine ligase (501 aa).

Residue 130-136 coordinates ATP; sequence GTHGKTS.

Belongs to the MurCDEF family.

Its subcellular location is the cytoplasm. The catalysed reaction is UDP-N-acetyl-alpha-D-muramate + L-alanine + ATP = UDP-N-acetyl-alpha-D-muramoyl-L-alanine + ADP + phosphate + H(+). The protein operates within cell wall biogenesis; peptidoglycan biosynthesis. Functionally, cell wall formation. The protein is UDP-N-acetylmuramate--L-alanine ligase of Nocardia farcinica (strain IFM 10152).